Reading from the N-terminus, the 526-residue chain is NAD(P)H-quinone oxidoreductase chain 4 2 (526 aa).

The next 14 helical transmembrane spans lie at 6–26 (FPWL…LPLI), 36–56 (WYAL…FYTG), 91–111 (LILL…PVSF), 113–133 (PKLF…VFAV), 137–157 (LLFF…LSIW), 169–189 (FILY…TMAF), 212–232 (LLLY…FPLH), 243–263 (TAPA…YALL), 275–295 (ALFG…AALT), 306–326 (IAYS…SFTD), 332–352 (AMLQ…MVGA), 375–397 (IFAM…GFVA), 417–437 (VIIV…LLSM), and 464–484 (VFVI…PKAV).

It belongs to the complex I subunit 4 family.

It is found in the cellular thylakoid membrane. It carries out the reaction a plastoquinone + NADH + (n+1) H(+)(in) = a plastoquinol + NAD(+) + n H(+)(out). It catalyses the reaction a plastoquinone + NADPH + (n+1) H(+)(in) = a plastoquinol + NADP(+) + n H(+)(out). In terms of biological role, NDH-1 shuttles electrons from NAD(P)H, via FMN and iron-sulfur (Fe-S) centers, to quinones in the respiratory chain. The immediate electron acceptor for the enzyme in this species is believed to be plastoquinone. Couples the redox reaction to proton translocation (for every two electrons transferred, four hydrogen ions are translocated across the cytoplasmic membrane), and thus conserves the redox energy in a proton gradient. This Picosynechococcus sp. (strain ATCC 27264 / PCC 7002 / PR-6) (Agmenellum quadruplicatum) protein is NAD(P)H-quinone oxidoreductase chain 4 2.